The chain runs to 90 residues: Putative UPF0401 protein YpjI (90 aa).

This sequence belongs to the UPF0401 family.

In Escherichia coli (strain K12), this protein is Putative UPF0401 protein YpjI (ypjI).